The chain runs to 822 residues: Tubulin polyglutamylase TTLL6 (822 aa).

The segment at 1 to 24 is disordered; sequence MLQCLTSESEEGAEEREESSTEDL. Positions 8 to 24 are enriched in acidic residues; sequence ESEEGAEEREESSTEDL. The TTL domain occupies 57 to 400; it reads KKRLVINLSN…GNCDKKKVLE (344 aa). ATP contacts are provided by residues Lys174, 180–181, 202–205, and 215–217; these read QG, QLYI, and KFD. A protein is bound at residue Gln180. Position 241 (Arg241) interacts with L-glutamate. 263–264 contributes to the ATP binding site; that stretch reads TN. L-glutamate contacts are provided by Tyr265, Ser266, and Lys283. Mg(2+) contacts are provided by Asp346, Glu359, and Asn361. A protein is bound at residue His362. Positions 371 to 450 are c-MTBD region; the sequence is KLDKEVKDSL…CGGFRLIYPG (80 aa). Residue Lys377 participates in L-glutamate binding. 2 disordered regions span residues 736 to 772 and 791 to 822; these read PLFP…SVFV and TQAR…TATA. The span at 802–814 shows a compositional bias: polar residues; sequence SHSGTTTRDSSTQ.

Belongs to the tubulin--tyrosine ligase family. In terms of assembly, found in a complex with CEP41. Mg(2+) serves as cofactor. As to expression, highly expressed in testis. Expressed in brain, heart, kidney, liver, lung, muscle and trachea. In the brain, specifically expressed in ependymal cilia.

It is found in the cytoplasm. Its subcellular location is the cytoskeleton. The protein resides in the cilium axoneme. The protein localises to the cilium basal body. The enzyme catalyses L-glutamyl-[protein] + L-glutamate + ATP = gamma-L-glutamyl-L-glutamyl-[protein] + ADP + phosphate + H(+). It catalyses the reaction (L-glutamyl)(n)-gamma-L-glutamyl-L-glutamyl-[protein] + L-glutamate + ATP = (L-glutamyl)(n+1)-gamma-L-glutamyl-L-glutamyl-[protein] + ADP + phosphate + H(+). Its function is as follows. Polyglutamylase which modifies both tubulin and non-tubulin proteins, generating alpha-linked polyglutamate side chains on the gamma-carboxyl group of specific glutamate residues of target proteins. Preferentially mediates ATP-dependent long polyglutamate chain elongation over the initiation step of the polyglutamylation reaction. Preferentially modifies the alpha-tubulin tail over a beta-tail. Promotes tubulin polyglutamylation which stimulates spastin/SPAST-mediated microtubule severing, thereby regulating microtubule functions. Mediates microtubule polyglutamylation in primary cilia axoneme which is important for ciliary structural formation and motility. Mediates microtubule polyglutamylation in motile cilia, necessary for the regulation of ciliary coordinated beating. Polyglutamylates non-tubulin protein nucleotidyltransferase CGAS, leading to CGAS DNA-binding inhibition, thereby preventing antiviral defense response. The polypeptide is Tubulin polyglutamylase TTLL6 (Mus musculus (Mouse)).